A 238-amino-acid chain; its full sequence is MNHKLPQHIAVVMDGNGRWAESRGLPRVEGHKAGLDSVKKIINCCLEKKISCLSLFAFSSENWSRPVTEVNFLMELFLEALRKEIDDLNQHGIRLKFTGDREPLSQILQKQMCDAEALTKNNQQLILNVVVNYGGKWDIVTAARKLIRTVLDGKLAYDEINEAVFAQFLDTNGMPEPDLFIRTSGELRISNFFLWQLAYTELYFTDVHWPDFNEHEFELALISFAKRARRFGQISQSE.

D14 is a catalytic residue. D14 serves as a coordination point for Mg(2+). Residues 15 to 18 (GNGR), W19, R27, H31, and 59 to 61 (SSE) each bind substrate. Residue N62 is the Proton acceptor of the active site. Residues W63, R65, R182, and 188–190 (RIS) each bind substrate. Residue E201 coordinates Mg(2+).

It belongs to the UPP synthase family. In terms of assembly, homodimer. Mg(2+) serves as cofactor.

The catalysed reaction is 8 isopentenyl diphosphate + (2E,6E)-farnesyl diphosphate = di-trans,octa-cis-undecaprenyl diphosphate + 8 diphosphate. Its function is as follows. Catalyzes the sequential condensation of isopentenyl diphosphate (IPP) with (2E,6E)-farnesyl diphosphate (E,E-FPP) to yield (2Z,6Z,10Z,14Z,18Z,22Z,26Z,30Z,34E,38E)-undecaprenyl diphosphate (di-trans,octa-cis-UPP). UPP is the precursor of glycosyl carrier lipid in the biosynthesis of bacterial cell wall polysaccharide components such as peptidoglycan and lipopolysaccharide. This is Ditrans,polycis-undecaprenyl-diphosphate synthase ((2E,6E)-farnesyl-diphosphate specific) from Legionella pneumophila subsp. pneumophila (strain Philadelphia 1 / ATCC 33152 / DSM 7513).